A 100-amino-acid chain; its full sequence is NADH-quinone oxidoreductase subunit K (100 aa).

A run of 3 helical transmembrane segments spans residues 1-21 (MIGLNHYLIVSGLLFCIGLAG), 28-48 (ILLLFFSTEIMLNAINIGFVA), and 64-84 (FIIAIAASEVAIGLGLVILWF).

It belongs to the complex I subunit 4L family. NDH-1 is composed of 14 different subunits. Subunits NuoA, H, J, K, L, M, N constitute the membrane sector of the complex.

The protein localises to the cell inner membrane. It carries out the reaction a quinone + NADH + 5 H(+)(in) = a quinol + NAD(+) + 4 H(+)(out). In terms of biological role, NDH-1 shuttles electrons from NADH, via FMN and iron-sulfur (Fe-S) centers, to quinones in the respiratory chain. The immediate electron acceptor for the enzyme in this species is believed to be ubiquinone. Couples the redox reaction to proton translocation (for every two electrons transferred, four hydrogen ions are translocated across the cytoplasmic membrane), and thus conserves the redox energy in a proton gradient. This chain is NADH-quinone oxidoreductase subunit K, found in Helicobacter pylori (strain B38).